Reading from the N-terminus, the 146-residue chain is Ribonuclease H (146 aa).

One can recognise an RNase H type-1 domain in the interval 1–143; sequence MEKKVTIYTD…CDELARLAVR (143 aa). Mg(2+) is bound by residues Asp10, Glu48, Asp70, and Asp135.

It belongs to the RNase H family. In terms of assembly, monomer. The cofactor is Mg(2+).

It localises to the cytoplasm. It carries out the reaction Endonucleolytic cleavage to 5'-phosphomonoester.. Functionally, endonuclease that specifically degrades the RNA of RNA-DNA hybrids. The chain is Ribonuclease H from Chlorobium phaeovibrioides (strain DSM 265 / 1930) (Prosthecochloris vibrioformis (strain DSM 265)).